The sequence spans 342 residues: RNA 3'-terminal phosphate cyclase (342 aa).

The protein belongs to the RNA 3'-terminal cyclase family. Type 1 subfamily.

It is found in the cytoplasm. The enzyme catalyses a 3'-end 3'-phospho-ribonucleotide-RNA + GTP = a 3'-end 2',3'-cyclophospho-ribonucleotide-RNA + GMP + diphosphate. Its activity is regulated as follows. Inhibited by GMP. Functionally, catalyzes the GTP-dependent conversion of 3'-phosphate to a 2',3'-cyclic phosphodiester at the end of RNA. The biological role of this enzyme is unknown but it is likely to function in some aspects of cellular RNA processing. The chain is RNA 3'-terminal phosphate cyclase from Pyrococcus furiosus (strain ATCC 43587 / DSM 3638 / JCM 8422 / Vc1).